We begin with the raw amino-acid sequence, 441 residues long: Tryptophan aminotransferase-related protein 1 (441 aa).

Residues Y110, 152–153, N219, 239–242, 262–265, and R273 contribute to the pyridoxal 5'-phosphate site; these read ST, DLAY, and TVSK. K265 is subject to N6-(pyridoxal phosphate)lysine.

It belongs to the alliinase family. Pyridoxal 5'-phosphate serves as cofactor. As to expression, highly expressed in anthers. Expressed at low levels in ovaries.

It carries out the reaction L-tryptophan + 2-oxoglutarate = indole-3-pyruvate + L-glutamate. Its pathway is plant hormone metabolism; auxin biosynthesis. Probable tryptophan aminotransferase that may be involved in the regulation of auxin production in developing rice grains. This is Tryptophan aminotransferase-related protein 1 from Oryza sativa subsp. japonica (Rice).